Here is a 186-residue protein sequence, read N- to C-terminus: MKTAQELRAGNVFMVGNDPMVVQKTEYIKGGRSSAKVSMKLKNLLTGAASETIYKADDKFDVVILSRKNCTYSYFADPMYVFMDEEFNQYEIEADNIGDALKFIVDGMEDQCEVTFYEGNPISVELPTIIVREVEYTEPAVKGDTSGKVMKTARLVGGTEIQVMSYIENGDKVEIDTRTGEFRKRA.

It belongs to the elongation factor P family.

It is found in the cytoplasm. Its pathway is protein biosynthesis; polypeptide chain elongation. In terms of biological role, involved in peptide bond synthesis. Stimulates efficient translation and peptide-bond synthesis on native or reconstituted 70S ribosomes in vitro. Probably functions indirectly by altering the affinity of the ribosome for aminoacyl-tRNA, thus increasing their reactivity as acceptors for peptidyl transferase. The protein is Elongation factor P of Neisseria gonorrhoeae (strain ATCC 700825 / FA 1090).